The primary structure comprises 680 residues: SH3 domain-binding protein 1 (680 aa).

Over residues 1-11 (MMKRQLHRMRQ) the composition is skewed to basic residues. 2 disordered regions span residues 1-24 (MMKR…TPET) and 160-184 (SQAA…HTTT). The interval 1–275 (MMKRQLHRMR…TAAPFSRVYG (275 aa)) is interaction with CGNL1. The BAR domain maps to 81-262 (MAESFKELDP…RDNHSQADHS (182 aa)). Polar residues predominate over residues 160–169 (SQAAKNSGSN). 2 positions are modified to phosphoserine: Ser241 and Ser262. Positions 276 to 469 (VSLRTHLQDL…ALIQNADTLF (194 aa)) constitute a Rho-GAP domain. Residues 470-680 (PGDINFNVSG…RPRGLISETE (211 aa)) form an interaction with CD2AP region. The disordered stretch occupies residues 488–680 (EKVSSQQVSE…RPRGLISETE (193 aa)). The segment covering 502-516 (VTVPAPATTPAPTPA) has biased composition (pro residues). Phosphoserine is present on Ser535. Polar residues predominate over residues 536–546 (PKVSRNPTETA). Pro residues predominate over residues 561–571 (PARPTMPPPQP). A Phosphoserine modification is found at Ser582. Thr592 is modified (phosphothreonine). The SH3-binding signature appears at 607-616 (APTMPPPLPP). The span at 609 to 621 (TMPPPLPPVPPQP) shows a compositional bias: pro residues. Ser632 bears the Phosphoserine mark. Residues 660–671 (HPPPPALPPQPR) show a composition bias toward pro residues.

In terms of assembly, interacts with RAC1. Interacts with the exocyst via EXOC4 and EXOC8; required for the localization of both SH3BP1 and the exocyst to the leading edge of migrating cells. Interacts with CD2AP and CGNL1; probably part of a complex at cell junctions. Interacts with CAPZA1; recruits CAPZA1 to forming cell junctions. May interact with AFDN. Interacts with PLXND1; they dissociate upon SEMA3E binding to PLXND1 allowing SH3BP1 to transduce downstream signal through RAC1 inactivation. Interacts with ABL1, GRB2 and SRC (via SH3 domain). In terms of tissue distribution, expressed in all tissues examined. Highest levels found in spleen and brain, lowest in heart and liver.

The protein resides in the cell projection. Its subcellular location is the cell junction. It localises to the tight junction. The protein localises to the adherens junction. It is found in the phagocytic cup. The protein resides in the nucleus. Its subcellular location is the cytoplasm. It localises to the cytosol. Its function is as follows. GTPase activating protein (GAP) which specifically converts GTP-bound Rho-type GTPases including RAC1 and CDC42 in their inactive GDP-bound form. By specifically inactivating RAC1 at the leading edge of migrating cells, it regulates the spatiotemporal organization of cell protrusions which is important for proper cell migration. Also negatively regulates CDC42 in the process of actin remodeling and the formation of epithelial cell junctions. Through its GAP activity toward RAC1 and/or CDC42 plays a specific role in phagocytosis of large particles. Specifically recruited by a PI3 kinase/PI3K-dependent mechanism to sites of large particles engagement, inactivates RAC1 and/or CDC42 allowing the reorganization of the underlying actin cytoskeleton required for engulfment. It also plays a role in angiogenesis and the process of repulsive guidance as part of a semaphorin-plexin signaling pathway. Following the binding of PLXND1 to extracellular SEMA3E it dissociates from PLXND1 and inactivates RAC1, inducing the intracellular reorganization of the actin cytoskeleton and the collapse of cells. The polypeptide is SH3 domain-binding protein 1 (Mus musculus (Mouse)).